A 142-amino-acid polypeptide reads, in one-letter code: Small ribosomal subunit protein uS12 (142 aa).

Residues 1 to 44 form a disordered region; the sequence is MTNGKYAARKLKKDRQQRRWSDSEYARRERGLGKKSDPLEGAPQ. Residues 7-16 show a composition bias toward basic residues; sequence AARKLKKDRQ. Over residues 17–38 the composition is skewed to basic and acidic residues; that stretch reads QRRWSDSEYARRERGLGKKSDP.

Belongs to the universal ribosomal protein uS12 family. In terms of assembly, part of the 30S ribosomal subunit.

Its function is as follows. With S4 and S5 plays an important role in translational accuracy. Located at the interface of the 30S and 50S subunits. The sequence is that of Small ribosomal subunit protein uS12 from Halobacterium salinarum (strain ATCC 29341 / DSM 671 / R1).